The sequence spans 46 residues: Denclatoxin-B (46 aa).

3 cysteine pairs are disulfide-bonded: Cys3–Cys40, Cys4–Cys32, and Cys16–Cys26.

It belongs to the plant thionin (TC 1.C.44) family.

It localises to the secreted. Thionins are small plant proteins which are toxic to animal cells. They seem to exert their toxic effect at the level of the cell membrane. Their precise function is not known. In Dendrophthora clavata (Columbian mistletoe), this protein is Denclatoxin-B.